The sequence spans 455 residues: Putative PTS system EIIBC component YbbF (455 aa).

In terms of domain architecture, PTS EIIB type-1 spans 8–90; sequence HHLAQKILEL…SKLVSAEEGA (83 aa). C30 serves as the catalytic Phosphocysteine intermediate; for EIIB activity. Residues 116-455 enclose the PTS EIIC type-1 domain; sequence RKIASIFIPL…YKDEMASQFD (340 aa). The next 10 membrane-spanning stretches (helical) occupy residues 118–138, 154–174, 181–201, 210–230, 250–270, 281–301, 325–345, 355–375, 399–419, and 423–443; these read IASIFIPLIPALVASGLITGI, IAIILTVIGSGLFTYLGILVG, FGGTPALGALAGILIINPEIA, LLPGRGGLIGVLFAAIFIAYT, VSLLITGIVTYVVFMPLGGFI, ILDIGGIAAGFILGATFLPLV, LLPILAMGGAGQVGAAFAVFV, AIAGGLPSGLLGIGEPLIFGV, YFQVATIAIGVSGLPLSFLVL, and IILYIVGLFISYAAGFLLTYA.

The protein resides in the cell membrane. The phosphoenolpyruvate-dependent sugar phosphotransferase system (sugar PTS), a major carbohydrate active -transport system, catalyzes the phosphorylation of incoming sugar substrates concomitantly with their translocation across the cell membrane. The protein is Putative PTS system EIIBC component YbbF (ybbF) of Bacillus subtilis (strain 168).